A 421-amino-acid chain; its full sequence is Gamma-glutamyl phosphate reductase (421 aa).

This sequence belongs to the gamma-glutamyl phosphate reductase family.

It localises to the cytoplasm. It carries out the reaction L-glutamate 5-semialdehyde + phosphate + NADP(+) = L-glutamyl 5-phosphate + NADPH + H(+). It functions in the pathway amino-acid biosynthesis; L-proline biosynthesis; L-glutamate 5-semialdehyde from L-glutamate: step 2/2. Its function is as follows. Catalyzes the NADPH-dependent reduction of L-glutamate 5-phosphate into L-glutamate 5-semialdehyde and phosphate. The product spontaneously undergoes cyclization to form 1-pyrroline-5-carboxylate. The polypeptide is Gamma-glutamyl phosphate reductase (Shewanella pealeana (strain ATCC 700345 / ANG-SQ1)).